We begin with the raw amino-acid sequence, 202 residues long: Orotate phosphoribosyltransferase (202 aa).

Residues Lys-93 and 113 to 121 contribute to the 5-phospho-alpha-D-ribose 1-diphosphate site; that span reads EDIITTGGS. Orotate contacts are provided by Thr-117 and Arg-145.

The protein belongs to the purine/pyrimidine phosphoribosyltransferase family. PyrE subfamily. Homodimer. Mg(2+) is required as a cofactor.

It catalyses the reaction orotidine 5'-phosphate + diphosphate = orotate + 5-phospho-alpha-D-ribose 1-diphosphate. It functions in the pathway pyrimidine metabolism; UMP biosynthesis via de novo pathway; UMP from orotate: step 1/2. Functionally, catalyzes the transfer of a ribosyl phosphate group from 5-phosphoribose 1-diphosphate to orotate, leading to the formation of orotidine monophosphate (OMP). In Campylobacter concisus (strain 13826), this protein is Orotate phosphoribosyltransferase.